The following is a 36-amino-acid chain: Collagen alpha-2(I) chain (36 aa).

The disordered stretch occupies residues Gly1–Arg36. Pro6 and Pro12 each carry 4-hydroxyproline. Residues Ala15–Pro29 show a composition bias toward low complexity. Pro33 is modified (4-hydroxyproline).

It belongs to the fibrillar collagen family. As to quaternary structure, trimers of one alpha 2(I) and two alpha 1(I) chains. In terms of processing, proline residues at the third position of the tripeptide repeating unit (G-X-Y) are hydroxylated in some or all of the chains.

It is found in the secreted. The protein localises to the extracellular space. It localises to the extracellular matrix. In terms of biological role, type I collagen is a member of group I collagen (fibrillar forming collagen). The sequence is that of Collagen alpha-2(I) chain from Brachylophosaurus canadensis (Campanian hadrosaur).